The primary structure comprises 290 residues: Glycine--tRNA ligase alpha subunit (290 aa).

The protein belongs to the class-II aminoacyl-tRNA synthetase family. Tetramer of two alpha and two beta subunits.

It is found in the cytoplasm. It catalyses the reaction tRNA(Gly) + glycine + ATP = glycyl-tRNA(Gly) + AMP + diphosphate. This is Glycine--tRNA ligase alpha subunit from Gloeobacter violaceus (strain ATCC 29082 / PCC 7421).